The chain runs to 475 residues: MLSIIVFGASGDLATKMTFPALFALYVRKIIPEDFQIIGYARSKLSQEAANKIVTAHIPIDDTVGASQKALNTFVEHYKYVPGTYDKPESFEMLNSIIAEKETAPASECTRIFYLVLPPHLFAPVSELIKSKAHPNGMVTRLIVEKPIGFDYKSADAILSDLSKHWSAKDTFKVDHFLGEDMIDGFTAIRFANSMFEPIWNREHIESVRVDFREDFGCEGRGGYFEGAGILRDVVQNHLLQLLTLLCIEEPKSQDAEDIIKCKVDFLKSLHPVSKEDIVYGQYTKSANGKVPGYRELDGVADDSEVSTFCALQLRSEAPRWKGIPIIISAGKGLDRDYFEARITFKRREGGMFPTVDSSNVLVLRVYPKEFIALKGHIKQPGFSRQIVPVTLDVKYPEAFPDTWIHKAYEVVIADAINGKHTHFISDDEVRTSWKIFDDVLDTTGDLSPLPYAFGSHHGPDATLEFFKKRNLEWD.

2 residues coordinate NADP(+): Arg42 and Lys146. Residues Lys146, Glu214, and Asp233 each contribute to the D-glucose 6-phosphate site. Residue His238 is the Proton acceptor of the active site. Lys332 is a binding site for D-glucose 6-phosphate. NADP(+)-binding residues include Arg342 and Arg365.

Belongs to the glucose-6-phosphate dehydrogenase family.

It is found in the cytoplasm. The enzyme catalyses D-glucose 6-phosphate + NADP(+) = 6-phospho-D-glucono-1,5-lactone + NADPH + H(+). It functions in the pathway carbohydrate degradation; pentose phosphate pathway; D-ribulose 5-phosphate from D-glucose 6-phosphate (oxidative stage): step 1/3. Catalyzes the rate-limiting step of the oxidative pentose-phosphate pathway, which represents a route for the dissimilation of carbohydrates besides glycolysis. The main function of this enzyme is to provide reducing power (NADPH) and pentose phosphates for fatty acid and nucleic acid synthesis. The polypeptide is Glucose-6-phosphate 1-dehydrogenase gcd1 (Schizosaccharomyces pombe (strain 972 / ATCC 24843) (Fission yeast)).